A 357-amino-acid polypeptide reads, in one-letter code: Glutamine synthetase (357 aa).

The region spanning 25-104 (VMAEYIWIDA…VLCETWDSDG (80 aa)) is the GS beta-grasp domain. The GS catalytic domain maps to 111-357 (YRHDCARLME…IIAETLCGGL (247 aa)).

It belongs to the glutamine synthetase family. As to quaternary structure, homooctamer.

It is found in the cytoplasm. The enzyme catalyses L-glutamate + NH4(+) + ATP = L-glutamine + ADP + phosphate + H(+). The chain is Glutamine synthetase (glnA) from Emericella nidulans (strain FGSC A4 / ATCC 38163 / CBS 112.46 / NRRL 194 / M139) (Aspergillus nidulans).